A 122-amino-acid polypeptide reads, in one-letter code: Large ribosomal subunit protein uL14 (122 aa).

Belongs to the universal ribosomal protein uL14 family. In terms of assembly, part of the 50S ribosomal subunit. Forms a cluster with proteins L3 and L19. In the 70S ribosome, L14 and L19 interact and together make contacts with the 16S rRNA in bridges B5 and B8.

Its function is as follows. Binds to 23S rRNA. Forms part of two intersubunit bridges in the 70S ribosome. This chain is Large ribosomal subunit protein uL14, found in Flavobacterium psychrophilum (strain ATCC 49511 / DSM 21280 / CIP 103535 / JIP02/86).